Consider the following 218-residue polypeptide: Keratin-associated protein 10-8 (218 aa).

The 16 X 5 AA repeats of C-C-X(3) stretch occupies residues 26–202 (CGNQVSSPSA…FCQPSCCHPA (177 aa)). Repeat copies occupy residues 50–54 (CCEPT), 55–59 (CCAPS), 60–64 (CCAPA), 86–90 (CSSSS), 96–100 (CCVPV), 101–105 (CCRPV), 111–115 (CCRPV), 121–125 (CCTPV), 131–135 (CCRPV), 136–140 (CCRPV), 141–145 (CCRPV), 151–155 (CCRPM), 161–167 (PCSAPSS), 168–172 (CCRPS), 187–191 (CCVPT), and 198–202 (CCHPA).

This sequence belongs to the KRTAP type 10 family. As to quaternary structure, interacts with hair keratins.

Its function is as follows. In the hair cortex, hair keratin intermediate filaments are embedded in an interfilamentous matrix, consisting of hair keratin-associated proteins (KRTAP), which are essential for the formation of a rigid and resistant hair shaft through their extensive disulfide bond cross-linking with abundant cysteine residues of hair keratins. The matrix proteins include the high-sulfur and high-glycine-tyrosine keratins. The sequence is that of Keratin-associated protein 10-8 from Bos taurus (Bovine).